Here is a 391-residue protein sequence, read N- to C-terminus: Tyrosine recombinase XerC-like (391 aa).

The Core-binding (CB) domain occupies 64 to 148; sequence VTLGDLMHTW…FLKTFFNYAV (85 aa). The Tyr recombinase domain occupies 175-384; the sequence is TEIETFSDEE…IPKQKTNAVE (210 aa). Residues Arg-210, Lys-244, His-335, Arg-338, and His-361 contribute to the active site. Catalysis depends on Tyr-371, which acts as the O-(3'-phospho-DNA)-tyrosine intermediate.

Belongs to the 'phage' integrase family.

It is found in the cytoplasm. In terms of biological role, site-specific tyrosine recombinase, which acts by catalyzing the cutting and rejoining of the recombining DNA molecules. This is Tyrosine recombinase XerC-like from Caldanaerobacter subterraneus subsp. tengcongensis (strain DSM 15242 / JCM 11007 / NBRC 100824 / MB4) (Thermoanaerobacter tengcongensis).